The sequence spans 70 residues: MKETNLSIKGVVKEIIKGDKFKVLLENNLLIEAHVSGKIRMHKIRILPGDSVEVEFSPYDLTKGRIIYRH.

One can recognise an S1-like domain in the interval M1–H70.

It belongs to the IF-1 family. As to quaternary structure, component of the 30S ribosomal translation pre-initiation complex which assembles on the 30S ribosome in the order IF-2 and IF-3, IF-1 and N-formylmethionyl-tRNA(fMet); mRNA recruitment can occur at any time during PIC assembly.

It is found in the cytoplasm. In terms of biological role, one of the essential components for the initiation of protein synthesis. Stabilizes the binding of IF-2 and IF-3 on the 30S subunit to which N-formylmethionyl-tRNA(fMet) subsequently binds. Helps modulate mRNA selection, yielding the 30S pre-initiation complex (PIC). Upon addition of the 50S ribosomal subunit IF-1, IF-2 and IF-3 are released leaving the mature 70S translation initiation complex. In Mycoplasmoides gallisepticum (strain R(low / passage 15 / clone 2)) (Mycoplasma gallisepticum), this protein is Translation initiation factor IF-1.